A 495-amino-acid polypeptide reads, in one-letter code: Bifunctional protein GlmU (495 aa).

A pyrophosphorylase region spans residues 1–241 (MTFPGDTAVL…SALVAGVNNR (241 aa)). Residues 12–15 (LAAG), lysine 26, glutamine 83, 88–89 (GT), 112–114 (SGD), glycine 151, glutamate 166, asparagine 181, and asparagine 239 each bind UDP-N-acetyl-alpha-D-glucosamine. Aspartate 114 contacts Mg(2+). Asparagine 239 is a binding site for Mg(2+). Positions 242–262 (VQLAELASELNRRVVAAHQLA) are linker. An N-acetyltransferase region spans residues 263-495 (GVTVVDPATT…TQPPDADQTP (233 aa)). Arginine 344 and lysine 362 together coordinate UDP-N-acetyl-alpha-D-glucosamine. Residue histidine 374 is the Proton acceptor of the active site. Residues tyrosine 377 and asparagine 388 each contribute to the UDP-N-acetyl-alpha-D-glucosamine site. Acetyl-CoA is bound by residues alanine 391, 397-398 (NY), serine 416, and alanine 434. The disordered stretch occupies residues 457-495 (IENWVQRKRPGSPAAQASKRASEMACQQPTQPPDADQTP). Residues 483 to 495 (QQPTQPPDADQTP) are compositionally biased toward low complexity.

In the N-terminal section; belongs to the N-acetylglucosamine-1-phosphate uridyltransferase family. It in the C-terminal section; belongs to the transferase hexapeptide repeat family. As to quaternary structure, homotrimer. Mg(2+) is required as a cofactor.

The protein localises to the cytoplasm. It carries out the reaction alpha-D-glucosamine 1-phosphate + acetyl-CoA = N-acetyl-alpha-D-glucosamine 1-phosphate + CoA + H(+). The enzyme catalyses N-acetyl-alpha-D-glucosamine 1-phosphate + UTP + H(+) = UDP-N-acetyl-alpha-D-glucosamine + diphosphate. The protein operates within nucleotide-sugar biosynthesis; UDP-N-acetyl-alpha-D-glucosamine biosynthesis; N-acetyl-alpha-D-glucosamine 1-phosphate from alpha-D-glucosamine 6-phosphate (route II): step 2/2. It participates in nucleotide-sugar biosynthesis; UDP-N-acetyl-alpha-D-glucosamine biosynthesis; UDP-N-acetyl-alpha-D-glucosamine from N-acetyl-alpha-D-glucosamine 1-phosphate: step 1/1. Its pathway is bacterial outer membrane biogenesis; LPS lipid A biosynthesis. In terms of biological role, catalyzes the last two sequential reactions in the de novo biosynthetic pathway for UDP-N-acetylglucosamine (UDP-GlcNAc). The C-terminal domain catalyzes the transfer of acetyl group from acetyl coenzyme A to glucosamine-1-phosphate (GlcN-1-P) to produce N-acetylglucosamine-1-phosphate (GlcNAc-1-P), which is converted into UDP-GlcNAc by the transfer of uridine 5-monophosphate (from uridine 5-triphosphate), a reaction catalyzed by the N-terminal domain. The protein is Bifunctional protein GlmU of Mycobacterium tuberculosis (strain ATCC 25177 / H37Ra).